A 206-amino-acid chain; its full sequence is Protein Nef (206 aa).

A lipid anchor (N-myristoyl glycine; by host) is attached at G2. S6 carries the post-translational modification Phosphoserine; by host. Residues 62–65 (QNEE) form an acidic; interacts with host PACS1 and PACS2; stabilizes the interaction of NEF/MHC-I with host AP1M1; necessary for MHC-I internalization region. The SH3-binding; interaction with Src family tyrosine kinases stretch occupies residues 69–78 (PVRPQVPLRP). Positions 72–75 (PQVP) match the PxxP; stabilizes the interaction of NEF/MHC-I with host AP1M1; necessary for MHC-I internalization motif. The segment at 108–124 (EILDLWVYHTQGFFPDW) is mediates dimerization, Nef-PTE1 interaction. The interval 148–180 (LEPEEVERANEGDNNILLHPICQHGQEDEAREV) is binding to ATP6V1H. The Dileucine internalization motif; necessary for CD4 internalization signature appears at 164 to 165 (LL). The short motif at 174–175 (ED) is the Diacidic; necessary for CD4 internalization element.

This sequence belongs to the lentivirus primate group Nef protein family. Monomer; cytosolic form. Homodimer; membrane bound form. Interacts with Nef associated p21-activated kinase (PAK2); this interaction activates PAK2. Associates with the Nef-MHC-I-AP1 complex; this complex is required for MHC-I internalization. Interacts (via C-terminus) with host PI3-kinase. Interacts with host PACS1; this interaction seems to be weak. Interacts with host PACS2. Interacts with host LCK and MAPK3; these interactions inhibit the kinase activity of the latter. Interacts with host ATP6V1H; this interaction may play a role in CD4 endocytosis. Associates with the CD4-Nef-AP2 complex; this complex is required for CD4 internalization. Interacts with host AP2 subunit alpha and AP2 subunit sigma2. Interacts with TCR-zeta chain; this interaction up-regulates the Fas ligand (FasL) surface expression. Interacts with host HCK, LYN, and SRC; these interactions activate the Src family kinases. Interacts with MAP3K5; this interaction inhibits the Fas and TNFR-mediated death signals. Interacts with beta-COP and PTE1. Interacts with human RACK1; this increases Nef phosphorylation by PKC. Interacts with TP53; this interaction decreases the half-life of TP53, protecting the infected cell against p53-mediated apoptosis. The virion-associated Nef proteins are cleaved by the viral protease to release the soluble C-terminal core protein. Nef is probably cleaved concomitantly with viral structural proteins on maturation of virus particles. Post-translationally, myristoylated. In terms of processing, phosphorylated on serine residues, probably by host PKCdelta and theta.

It localises to the host cell membrane. The protein resides in the virion. Its subcellular location is the secreted. It is found in the host Golgi apparatus membrane. In terms of biological role, factor of infectivity and pathogenicity, required for optimal virus replication. Alters numerous pathways of T-lymphocyte function and down-regulates immunity surface molecules in order to evade host defense and increase viral infectivity. Alters the functionality of other immunity cells, like dendritic cells, monocytes/macrophages and NK cells. Its function is as follows. In infected CD4(+) T-lymphocytes, down-regulates the surface MHC-I, mature MHC-II, CD4, CD28, CCR5 and CXCR4 molecules. Mediates internalization and degradation of host CD4 through the interaction of with the cytoplasmic tail of CD4, the recruitment of AP-2 (clathrin adapter protein complex 2), internalization through clathrin coated pits, and subsequent transport to endosomes and lysosomes for degradation. Diverts host MHC-I molecules to the trans-Golgi network-associated endosomal compartments by an endocytic pathway to finally target them for degradation. MHC-I down-regulation may involve AP-1 (clathrin adapter protein complex 1) or possibly Src family kinase-ZAP70/Syk-PI3K cascade recruited by PACS2. In consequence infected cells are masked for immune recognition by cytotoxic T-lymphocytes. Decreasing the number of immune receptors also prevents reinfection by more HIV particles (superinfection). Down-regulates host SERINC3 and SERINC5 thereby excluding these proteins from the viral particles. Virion infectivity is drastically higher when SERINC3 or SERINC5 are excluded from the viral envelope, because these host antiviral proteins impair the membrane fusion event necessary for subsequent virion penetration. Bypasses host T-cell signaling by inducing a transcriptional program nearly identical to that of anti-CD3 cell activation. Interaction with TCR-zeta chain up-regulates the Fas ligand (FasL). Increasing surface FasL molecules and decreasing surface MHC-I molecules on infected CD4(+) cells send attacking cytotoxic CD8+ T-lymphocytes into apoptosis. Functionally, plays a role in optimizing the host cell environment for viral replication without causing cell death by apoptosis. Protects the infected cells from apoptosis in order to keep them alive until the next virus generation is ready to strike. Inhibits the Fas and TNFR-mediated death signals by blocking MAP3K5/ASK1. Decreases the half-life of TP53, protecting the infected cell against p53-mediated apoptosis. Inhibits the apoptotic signals regulated by the Bcl-2 family proteins through the formation of a Nef/PI3-kinase/PAK2 complex that leads to activation of PAK2 and induces phosphorylation of host BAD. In terms of biological role, extracellular Nef protein targets CD4(+) T-lymphocytes for apoptosis by interacting with CXCR4 surface receptors. This is Protein Nef from Simian immunodeficiency virus (isolate MB66) (SIV-cpz).